Consider the following 130-residue polypeptide: Glycine cleavage system H protein (130 aa).

The Lipoyl-binding domain maps to 24-106 (TLTIGITDHA…YGEGWIMRIR (83 aa)). Lysine 65 bears the N6-lipoyllysine mark. Residues 111–130 (DDLEQLLDPEDYQDLVADEE) are disordered.

The protein belongs to the GcvH family. In terms of assembly, the glycine cleavage system is composed of four proteins: P, T, L and H. (R)-lipoate serves as cofactor.

Functionally, the glycine cleavage system catalyzes the degradation of glycine. The H protein shuttles the methylamine group of glycine from the P protein to the T protein. The chain is Glycine cleavage system H protein from Alkalilimnicola ehrlichii (strain ATCC BAA-1101 / DSM 17681 / MLHE-1).